The chain runs to 377 residues: Guanine nucleotide exchange factor for Rab-3A (377 aa).

Residues 23 to 57 (WKNLGPSKGNRKSPGGLVEASASWEEAGGEEHPAA) form a disordered region. Residues 77–128 (SEFLKEELYKAQKELKLKDEECERLCKVRAQLEQELEELTASLFEEAHKMVR) are a coiled coil. A disordered region spans residues 167–198 (PASPNRELHPQLLSPTKAGPRKGHSRQKSTSS). A phosphoserine mark is found at Ser169 and Ser180.

The protein belongs to the SEC2 family. In terms of assembly, interacts with RAB3A and IHPK1 through the coiled-coil domain. This interaction is competitive. IHPK1 kinase activity is not required for this interaction. As to expression, selectively localized to the brain (at protein level).

Functionally, guanine nucleotide exchange factor (GEF) which may activate RAB3A, a GTPase that regulates synaptic vesicle exocytosis. Promotes the exchange of GDP to GTP, converting inactive GDP-bound Rab proteins into their active GTP-bound form. May also activate RAB8A and RAB8B. The polypeptide is Guanine nucleotide exchange factor for Rab-3A (Rab3il1) (Rattus norvegicus (Rat)).